A 397-amino-acid polypeptide reads, in one-letter code: Phosphoglycerate kinase (397 aa).

Substrate-binding positions include Asp21–Asn23, Arg37, His60–Arg63, Arg119, and Arg152. ATP-binding positions include Lys203, Gly294, Glu325, and Gly354–Ser357.

Belongs to the phosphoglycerate kinase family. As to quaternary structure, monomer.

The protein resides in the cytoplasm. The catalysed reaction is (2R)-3-phosphoglycerate + ATP = (2R)-3-phospho-glyceroyl phosphate + ADP. Its pathway is carbohydrate degradation; glycolysis; pyruvate from D-glyceraldehyde 3-phosphate: step 2/5. In Chlorobium phaeobacteroides (strain DSM 266 / SMG 266 / 2430), this protein is Phosphoglycerate kinase.